Here is a 147-residue protein sequence, read N- to C-terminus: 3-dehydroquinate dehydratase 2 (147 aa).

The active-site Proton acceptor is Tyr23. Residues Asn74, His80, and Asp87 each coordinate substrate. His100 serves as the catalytic Proton donor. Substrate-binding positions include 101-102 and Arg111; that span reads IS.

It belongs to the type-II 3-dehydroquinase family. As to quaternary structure, homododecamer.

The catalysed reaction is 3-dehydroquinate = 3-dehydroshikimate + H2O. Its pathway is metabolic intermediate biosynthesis; chorismate biosynthesis; chorismate from D-erythrose 4-phosphate and phosphoenolpyruvate: step 3/7. In terms of biological role, catalyzes a trans-dehydration via an enolate intermediate. The protein is 3-dehydroquinate dehydratase 2 (aroQ2) of Agrobacterium fabrum (strain C58 / ATCC 33970) (Agrobacterium tumefaciens (strain C58)).